Consider the following 1085-residue polypeptide: DNA-directed RNA polymerase subunit beta (1085 aa).

This sequence belongs to the RNA polymerase beta chain family. In plastids the minimal PEP RNA polymerase catalytic core is composed of four subunits: alpha, beta, beta', and beta''. When a (nuclear-encoded) sigma factor is associated with the core the holoenzyme is formed, which can initiate transcription.

It is found in the plastid. Its subcellular location is the chloroplast. The enzyme catalyses RNA(n) + a ribonucleoside 5'-triphosphate = RNA(n+1) + diphosphate. Functionally, DNA-dependent RNA polymerase catalyzes the transcription of DNA into RNA using the four ribonucleoside triphosphates as substrates. This is DNA-directed RNA polymerase subunit beta from Physcomitrium patens (Spreading-leaved earth moss).